A 1004-amino-acid polypeptide reads, in one-letter code: Outer cell wall protein (1004 aa).

The N-terminal stretch at 1–24 (MNKKVVLSVLSTTLVASVAASAFA) is a signal peptide.

In terms of assembly, the outer cell wall layer is composed of subunits of the outer cell wall protein. These proteins form a hexagonal array with a lattice constant of 14.5 nm in the outer cell wall layers.

The protein localises to the secreted. Its subcellular location is the cell wall. The protein resides in the S-layer. The outer wall protein binds to the middle cell wall protein. The polypeptide is Outer cell wall protein (Brevibacillus brevis (strain 47 / JCM 6285 / NBRC 100599)).